The following is a 329-amino-acid chain: uncharacterized protein (329 aa).

The Nudix hydrolase domain maps to 27–185 (PRRASVAVII…IQIDSSRALK (159 aa)). 3 helical membrane passes run 123–143 (VITS…VFIL), 227–247 (PFLR…LSPS), and 303–323 (LTLL…FLII).

Its subcellular location is the membrane. This is an uncharacterized protein from Schizosaccharomyces pombe (strain 972 / ATCC 24843) (Fission yeast).